We begin with the raw amino-acid sequence, 780 residues long: ATP-dependent 6-phosphofructokinase, liver type (780 aa).

Ala2 bears the N-acetylalanine mark. Residues 2-390 are N-terminal catalytic PFK domain 1; the sequence is AAVDLEKLRA…NWNIYKLLAH (389 aa). ATP is bound by residues Gly25, 88–89, and 118–121; these read RC and GDGS. Residue Asp119 coordinates Mg(2+). Substrate-binding positions include 164–166, Arg201, 208–210, Glu264, Arg292, and 298–301; these read SID, MGR, and HVQR. Asp166 functions as the Proton acceptor in the catalytic mechanism. Phosphoserine is present on Ser377. The interdomain linker stretch occupies residues 391–400; that stretch reads QKPPKEKSNF. Residues 401–780 form a C-terminal regulatory PFK domain 2 region; the sequence is SLAILNVGAP…RRTLSMDKGF (380 aa). Beta-D-fructose 2,6-bisphosphate contacts are provided by residues Arg470, 527–531, Arg565, 572–574, and Glu628; these read TISNN and MGG. Residue Ser529 is glycosylated (O-linked (GlcNAc) serine). Residue Tyr640 is modified to Phosphotyrosine. Beta-D-fructose 2,6-bisphosphate contacts are provided by residues Arg654, 660 to 663, and Arg734; that span reads HLQQ. Position 775 is a phosphoserine (Ser775).

It belongs to the phosphofructokinase type A (PFKA) family. ATP-dependent PFK group I subfamily. Eukaryotic two domain clade 'E' sub-subfamily. In terms of assembly, homo- and heterotetramers. Phosphofructokinase (PFK) enzyme functions as a tetramer composed of different combinations of 3 types of subunits, called PFKM (M), PFKL (L) and PFKP (P). The composition of the PFK tetramer differs according to the tissue type it is present in. The kinetic and regulatory properties of the tetrameric enzyme are dependent on the subunit composition, hence can vary across tissues. Mg(2+) serves as cofactor. Post-translationally, glcNAcylation at Ser-529 by OGT decreases enzyme activity, leading to redirect glucose flux through the oxidative pentose phosphate pathway. Glycosylation is stimulated by both hypoxia and glucose deprivation.

The protein localises to the cytoplasm. It catalyses the reaction beta-D-fructose 6-phosphate + ATP = beta-D-fructose 1,6-bisphosphate + ADP + H(+). It participates in carbohydrate degradation; glycolysis; D-glyceraldehyde 3-phosphate and glycerone phosphate from D-glucose: step 3/4. Allosterically activated by ADP, AMP, or fructose 2,6-bisphosphate, and allosterically inhibited by ATP or citrate. GlcNAcylation by OGT overcomes allosteric regulation. Functionally, catalyzes the phosphorylation of D-fructose 6-phosphate to fructose 1,6-bisphosphate by ATP, the first committing step of glycolysis. Negatively regulates the phagocyte oxidative burst in response to bacterial infection by controlling cellular NADPH biosynthesis and NADPH oxidase-derived reactive oxygen species. Upon macrophage activation, drives the metabolic switch toward glycolysis, thus preventing glucose turnover that produces NADPH via pentose phosphate pathway. This is ATP-dependent 6-phosphofructokinase, liver type (PFKL) from Pongo abelii (Sumatran orangutan).